We begin with the raw amino-acid sequence, 436 residues long: Anaerobic glycerol-3-phosphate dehydrogenase subunit B (436 aa).

The protein belongs to the anaerobic G-3-P dehydrogenase subunit B family. Composed of a catalytic GlpA/B dimer and of membrane bound GlpC. Requires FMN as cofactor.

It catalyses the reaction a quinone + sn-glycerol 3-phosphate = dihydroxyacetone phosphate + a quinol. It participates in polyol metabolism; glycerol degradation via glycerol kinase pathway; glycerone phosphate from sn-glycerol 3-phosphate (anaerobic route): step 1/1. Its function is as follows. Conversion of glycerol 3-phosphate to dihydroxyacetone. Uses fumarate or nitrate as electron acceptor. This chain is Anaerobic glycerol-3-phosphate dehydrogenase subunit B, found in Vibrio cholerae serotype O1 (strain M66-2).